The primary structure comprises 343 residues: Probable magnesium transporter NIPA4 (343 aa).

The Extracellular segment spans residues 1-18; that stretch reads MAESSGSWRDSYKGMSSD. A helical transmembrane segment spans residues 19–39; that stretch reads NIKGLVLALSSSLFIGASFIV. Residues 40–66 are Cytoplasmic-facing; that stretch reads KKKGLKKAASTGTRAGVGGYSYLYEPL. A helical transmembrane segment spans residues 67-87; that stretch reads WWIGMTTMLLGEIANFAAYAF. Residues 88–90 lie on the Extracellular side of the membrane; sequence APA. A helical membrane pass occupies residues 91–111; it reads ILVTPLGAVSIIISAVLAHII. Over 112-115 the chain is Cytoplasmic; the sequence is LREK. Residues 116-136 form a helical membrane-spanning segment; that stretch reads LHIFGILGCALCVVGSTTIVL. The Extracellular segment spans residues 137–157; it reads HAPQEREIDSVIEVWNLATEP. A helical membrane pass occupies residues 158–178; it reads AFMFYASLVIGAAVFLIIRFV. The Cytoplasmic portion of the chain corresponds to 179 to 189; it reads PQYGQTNVMVY. The helical transmembrane segment at 190-210 threads the bilayer; sequence IGICSLVGSLSVMSVKALGIA. Residues 211–220 lie on the Extracellular side of the membrane; it reads LKLTFSGTNQ. The chain crosses the membrane as a helical span at residues 221–241; sequence LFYPQTWIFTLVVLTCVVTQL. Residues 242 to 254 are Cytoplasmic-facing; that stretch reads NYLNKALDTFNTA. The chain crosses the membrane as a helical span at residues 255 to 275; that stretch reads IVSPIYYVMFTSLTILASVIM. Residues 276–283 lie on the Extracellular side of the membrane; it reads FKDWDRQN. Residues 284-304 form a helical membrane-spanning segment; sequence GTQIVTEICGFVTILSGTFLL. Residues 305 to 343 lie on the Cytoplasmic side of the membrane; it reads HRTKDMVEGSSVILPLRISKHINEEEGIPLRRQESLRSP.

The protein belongs to the NIPA (TC 2.A.7) family. Homodimer.

The protein resides in the cell membrane. It is found in the early endosome. Functionally, acts as a Mg(2+) transporter. Can also transport other divalent cations such as Fe(2+), Sr(2+), Ba(2+), Mn(2+) and Co(2+) but to a much less extent than Mg(2+). This chain is Probable magnesium transporter NIPA4, found in Arabidopsis thaliana (Mouse-ear cress).